A 338-amino-acid polypeptide reads, in one-letter code: Glycerol-3-phosphate dehydrogenase [NAD(P)+] (338 aa).

NADPH contacts are provided by Trp20 and Lys110. 3 residues coordinate sn-glycerol 3-phosphate: Lys110, Gly141, and Ser143. Ala145 is a binding site for NADPH. Lys197, Asp250, Ser260, Arg261, and Asn262 together coordinate sn-glycerol 3-phosphate. Lys197 serves as the catalytic Proton acceptor. Arg261 provides a ligand contact to NADPH. Residue Glu287 coordinates NADPH.

This sequence belongs to the NAD-dependent glycerol-3-phosphate dehydrogenase family.

It localises to the cytoplasm. The enzyme catalyses sn-glycerol 3-phosphate + NAD(+) = dihydroxyacetone phosphate + NADH + H(+). The catalysed reaction is sn-glycerol 3-phosphate + NADP(+) = dihydroxyacetone phosphate + NADPH + H(+). It participates in membrane lipid metabolism; glycerophospholipid metabolism. Functionally, catalyzes the reduction of the glycolytic intermediate dihydroxyacetone phosphate (DHAP) to sn-glycerol 3-phosphate (G3P), the key precursor for phospholipid synthesis. The sequence is that of Glycerol-3-phosphate dehydrogenase [NAD(P)+] from Aster yellows witches'-broom phytoplasma (strain AYWB).